A 306-amino-acid chain; its full sequence is Recombination-associated protein RdgC (306 aa).

This sequence belongs to the RdgC family.

It localises to the cytoplasm. Its subcellular location is the nucleoid. In terms of biological role, may be involved in recombination. The protein is Recombination-associated protein RdgC of Pseudomonas aeruginosa (strain LESB58).